We begin with the raw amino-acid sequence, 224 residues long: Uracil-DNA glycosylase (224 aa).

The Proton acceptor role is filled by D65.

It belongs to the uracil-DNA glycosylase (UDG) superfamily. UNG family.

The protein localises to the cytoplasm. It carries out the reaction Hydrolyzes single-stranded DNA or mismatched double-stranded DNA and polynucleotides, releasing free uracil.. Excises uracil residues from the DNA which can arise as a result of misincorporation of dUMP residues by DNA polymerase or due to deamination of cytosine. This chain is Uracil-DNA glycosylase, found in Buchnera aphidicola subsp. Baizongia pistaciae (strain Bp).